A 237-amino-acid polypeptide reads, in one-letter code: 4'-phosphopantetheinyl transferase gsp (237 aa).

Residues Asp-106, Glu-108, and Glu-150 each contribute to the Mg(2+) site.

The protein belongs to the P-Pant transferase superfamily. Gsp/Sfp/HetI/AcpT family. Mg(2+) serves as cofactor.

The enzyme catalyses apo-[peptidyl-carrier protein] + CoA = holo-[peptidyl-carrier protein] + adenosine 3',5'-bisphosphate + H(+). Functionally, activates the five peptidyl carrier protein (PCP) domains of gramicidin synthase GrsAB, by transferring the 4'-phosphopantetheinyl moiety of coenzyme A (CoA) to a serine residue. Required for gramicidin S production. The sequence is that of 4'-phosphopantetheinyl transferase gsp (gsp) from Aneurinibacillus migulanus (Bacillus migulanus).